A 151-amino-acid polypeptide reads, in one-letter code: Small ribosomal subunit protein uS15 (151 aa).

Residues 1 to 20 (MARLHSGKRGSSGSTRPLRT) are disordered.

It belongs to the universal ribosomal protein uS15 family. As to quaternary structure, part of the 30S ribosomal subunit.

The protein is Small ribosomal subunit protein uS15 of Methanococcus maripaludis (strain C7 / ATCC BAA-1331).